A 446-amino-acid chain; its full sequence is Exodeoxyribonuclease 7 large subunit (446 aa).

Belongs to the XseA family. Heterooligomer composed of large and small subunits.

The protein resides in the cytoplasm. It carries out the reaction Exonucleolytic cleavage in either 5'- to 3'- or 3'- to 5'-direction to yield nucleoside 5'-phosphates.. In terms of biological role, bidirectionally degrades single-stranded DNA into large acid-insoluble oligonucleotides, which are then degraded further into small acid-soluble oligonucleotides. The chain is Exodeoxyribonuclease 7 large subunit from Ligilactobacillus salivarius (strain UCC118) (Lactobacillus salivarius).